A 727-amino-acid polypeptide reads, in one-letter code: Protein edg-1 (727 aa).

The interval 703 to 727 (FAESSVKPTTSSAYGNSSNFSRYAD) is disordered.

As to quaternary structure, may interact with deps-1 and prg-1.

Its subcellular location is the cytoplasmic granule. In terms of biological role, plays a role in regulating deps-1 cluster formation in the germline. This is Protein edg-1 from Caenorhabditis elegans.